We begin with the raw amino-acid sequence, 239 residues long: MGRIGNIINRKGKQDAQRAKIFTKHARAIAVAAKEGGADPEYNAALKTAIEKAKADNMPNDNIDRAIAKGAGAGAGEDYETIVYEGYGPGGVAVIVETLTDNKNRTAGNVRYYFDKNGGNLGTSGCVSFMFDKKGQILVGLGDGVSEEELMDVALEAGAEDFITEEDGYEIITTPEDFSSVRDELKAKGYEFISADVKMIPQTTTVLTEESHLKMMNKLVDMLEEDDDVQDIYHNWEVE.

The protein belongs to the TACO1 family.

It is found in the cytoplasm. The polypeptide is Probable transcriptional regulatory protein CD630_07950 (Clostridioides difficile (strain 630) (Peptoclostridium difficile)).